A 127-amino-acid chain; its full sequence is Protein pkiA (127 aa).

Positions 16–127 (IFAKIISGAI…GGRQMNWPPG (112 aa)) constitute an HIT domain.

The sequence is that of Protein pkiA (pkiA) from Dictyostelium discoideum (Social amoeba).